A 75-amino-acid polypeptide reads, in one-letter code: Putative membrane protein insertion efficiency factor (75 aa).

Belongs to the UPF0161 family.

Its subcellular location is the cell membrane. Could be involved in insertion of integral membrane proteins into the membrane. The sequence is that of Putative membrane protein insertion efficiency factor from Halalkalibacterium halodurans (strain ATCC BAA-125 / DSM 18197 / FERM 7344 / JCM 9153 / C-125) (Bacillus halodurans).